A 97-amino-acid polypeptide reads, in one-letter code: YcgL domain-containing protein PP_4590 (97 aa).

The YcgL domain occupies 3–87 (RICSIYKSPR…LEDEYIEHLP (85 aa)).

The sequence is that of YcgL domain-containing protein PP_4590 from Pseudomonas putida (strain ATCC 47054 / DSM 6125 / CFBP 8728 / NCIMB 11950 / KT2440).